We begin with the raw amino-acid sequence, 731 residues long: Catalase-peroxidase (731 aa).

The segment at residues 98–226 (WHAAGTYRTA…LAAVQMGLIY (129 aa)) is a cross-link (tryptophyl-tyrosyl-methioninium (Trp-Tyr) (with M-252)). His99 serves as the catalytic Proton acceptor. A cross-link (tryptophyl-tyrosyl-methioninium (Tyr-Met) (with W-98)) is located at residues 226-252 (YVNPEGPDGNPDIVASGHDVIETFGRM). His267 is a binding site for heme b.

It belongs to the peroxidase family. Peroxidase/catalase subfamily. In terms of assembly, homodimer or homotetramer. Requires heme b as cofactor. In terms of processing, formation of the three residue Trp-Tyr-Met cross-link is important for the catalase, but not the peroxidase activity of the enzyme.

It catalyses the reaction H2O2 + AH2 = A + 2 H2O. The enzyme catalyses 2 H2O2 = O2 + 2 H2O. Its function is as follows. Bifunctional enzyme with both catalase and broad-spectrum peroxidase activity. The chain is Catalase-peroxidase from Ruegeria pomeroyi (strain ATCC 700808 / DSM 15171 / DSS-3) (Silicibacter pomeroyi).